We begin with the raw amino-acid sequence, 463 residues long: tRNA-2-methylthio-N(6)-dimethylallyladenosine synthase (463 aa).

The 117-residue stretch at 19–135 (GSYWITTFGC…LESLLNQVDS (117 aa)) folds into the MTTase N-terminal domain. [4Fe-4S] cluster-binding residues include Cys28, Cys64, Cys98, Cys170, Cys174, and Cys177. One can recognise a Radical SAM core domain in the interval 156–393 (RDSSICGWVN…NSLVENIAKE (238 aa)). The region spanning 396-463 (QRYKNTSQEI…RPFSLTAKLL (68 aa)) is the TRAM domain.

This sequence belongs to the methylthiotransferase family. MiaB subfamily. As to quaternary structure, monomer. [4Fe-4S] cluster is required as a cofactor.

The protein resides in the cytoplasm. It catalyses the reaction N(6)-dimethylallyladenosine(37) in tRNA + (sulfur carrier)-SH + AH2 + 2 S-adenosyl-L-methionine = 2-methylsulfanyl-N(6)-dimethylallyladenosine(37) in tRNA + (sulfur carrier)-H + 5'-deoxyadenosine + L-methionine + A + S-adenosyl-L-homocysteine + 2 H(+). Functionally, catalyzes the methylthiolation of N6-(dimethylallyl)adenosine (i(6)A), leading to the formation of 2-methylthio-N6-(dimethylallyl)adenosine (ms(2)i(6)A) at position 37 in tRNAs that read codons beginning with uridine. This Prochlorococcus marinus (strain NATL2A) protein is tRNA-2-methylthio-N(6)-dimethylallyladenosine synthase.